A 369-amino-acid chain; its full sequence is F-box protein UCC1 (369 aa).

Positions 8-45 (LMDLPLEIHLSLLEYVPNELRAVNKYFYVLHNHSYKEK) constitute an F-box domain.

In terms of assembly, component of the SCF(UCC1) E3 ubiquitin-protein ligase complex composed of CDC53, SKP1, RBX1 and UCC1. Interacts with CIT2. Monoubiquitinated by UBC4.

It participates in protein modification; protein ubiquitination. Functionally, substrate recognition component of the SKP1-CUL1-F-box protein E3 ubiquitin-protein ligase complex SCF(UCC1) which mediates the ubiquitination and subsequent proteasomal degradation of target proteins. The SCF(UCC1) complex acts as a metabolic switch for the glyoxylate cycle and regulates the level of CIT2 protein to maintain citrate homeostasis. The protein is F-box protein UCC1 (UCC1) of Saccharomyces cerevisiae (strain ATCC 204508 / S288c) (Baker's yeast).